A 135-amino-acid polypeptide reads, in one-letter code: ATP synthase epsilon chain (135 aa).

This sequence belongs to the ATPase epsilon chain family. In terms of assembly, F-type ATPases have 2 components, CF(1) - the catalytic core - and CF(0) - the membrane proton channel. CF(1) has five subunits: alpha(3), beta(3), gamma(1), delta(1), epsilon(1). CF(0) has three main subunits: a, b and c.

The protein resides in the cell inner membrane. Functionally, produces ATP from ADP in the presence of a proton gradient across the membrane. The protein is ATP synthase epsilon chain of Allorhizobium ampelinum (strain ATCC BAA-846 / DSM 112012 / S4) (Agrobacterium vitis (strain S4)).